Here is a 329-residue protein sequence, read N- to C-terminus: DNA-directed RNA polymerase subunit alpha (329 aa).

The tract at residues 1 to 235 (MQGSVIEFLK…EQLDAFVDLR (235 aa)) is alpha N-terminal domain (alpha-NTD). The segment at 249–329 (FDPILLRPVD…NWPPASIAED (81 aa)) is alpha C-terminal domain (alpha-CTD).

The protein belongs to the RNA polymerase alpha chain family. As to quaternary structure, homodimer. The RNAP catalytic core consists of 2 alpha, 1 beta, 1 beta' and 1 omega subunit. When a sigma factor is associated with the core the holoenzyme is formed, which can initiate transcription.

It catalyses the reaction RNA(n) + a ribonucleoside 5'-triphosphate = RNA(n+1) + diphosphate. DNA-dependent RNA polymerase catalyzes the transcription of DNA into RNA using the four ribonucleoside triphosphates as substrates. The polypeptide is DNA-directed RNA polymerase subunit alpha (Haemophilus ducreyi (strain 35000HP / ATCC 700724)).